A 567-amino-acid chain; its full sequence is Oxygen-dependent choline dehydrogenase (567 aa).

An FAD-binding site is contributed by 4-33; that stretch reads DYIIIGAGSAGNVLAARLTEDADVTVLLLE. Histidine 473 acts as the Proton acceptor in catalysis.

The protein belongs to the GMC oxidoreductase family. Requires FAD as cofactor.

It carries out the reaction choline + A = betaine aldehyde + AH2. It catalyses the reaction betaine aldehyde + NAD(+) + H2O = glycine betaine + NADH + 2 H(+). The protein operates within amine and polyamine biosynthesis; betaine biosynthesis via choline pathway; betaine aldehyde from choline (cytochrome c reductase route): step 1/1. In terms of biological role, involved in the biosynthesis of the osmoprotectant glycine betaine. Catalyzes the oxidation of choline to betaine aldehyde and betaine aldehyde to glycine betaine at the same rate. This chain is Oxygen-dependent choline dehydrogenase, found in Yersinia pseudotuberculosis serotype O:1b (strain IP 31758).